Here is a 154-residue protein sequence, read N- to C-terminus: Putative lipoprotein MAB_4074c (154 aa).

Positions 1-21 (MMNRVIVGAMGLLAAGAVVVG) are cleaved as a signal peptide. Residue Cys-22 is the site of N-palmitoyl cysteine attachment. The S-diacylglycerol cysteine moiety is linked to residue Cys-22.

This sequence belongs to the mycobacterial 19 kDa antigen family.

It is found in the cell membrane. This Mycobacteroides abscessus (strain ATCC 19977 / DSM 44196 / CCUG 20993 / CIP 104536 / JCM 13569 / NCTC 13031 / TMC 1543 / L948) (Mycobacterium abscessus) protein is Putative lipoprotein MAB_4074c.